We begin with the raw amino-acid sequence, 692 residues long: Ena/VASP-like protein (692 aa).

The 112-residue stretch at 1–112 (MSEQSICQAR…NAMLFALNIM (112 aa)) folds into the WH1 domain. Disordered stretches follow at residues 116–310 (DGGP…VQKN), 466–518 (SAAM…YEES), and 531–650 (KLRK…NDVS). 2 stretches are compositionally biased toward polar residues: residues 123-132 (RQAQNIQNGP) and 159-169 (STTVSTLQINV). Positions 214 to 226 (SSKSTNKSSNRTS) are enriched in low complexity. Residues 231–267 (LQNSHCGSEPSTSQSSAFSPIRPSNGTVSRSIKQISL) show a composition bias toward polar residues. Low complexity-rich tracts occupy residues 288–310 (PSLSFSPCSSSPPVSVTSSVQKN) and 466–479 (SAAMVASVGSAPAP). The segment covering 480–506 (ASGPPPPPPPGPPPPSGGTPPPAPPLP) has biased composition (pro residues). The EVH2 block A stretch occupies residues 522 to 542 (GLAAALAGAKLRKVQRPEDGS). The tract at residues 522 to 689 (GLAAALAGAK…DAIRQELSRI (168 aa)) is EVH2. A KLKR motif is present at residues 531–534 (KLRK). Residues 563–580 (GGLMEEMNKLLAKRRKAA) form an EVH2 block B region. Positions 597–617 (EDASLSSSPVTRGPTPQNSSD) are enriched in polar residues. Over residues 618–628 (LGKKPWERSNS) the composition is skewed to basic and acidic residues. The tract at residues 655-689 (DFDRMKQEILEEVVRELHKVKEEIIDAIRQELSRI) is EVH2 block C.

It belongs to the Ena/VASP family. As to expression, during embryonic and tadpole development, expressed in the cement gland, brain, neural tube, myotome and neural placodes, including the otic, lateral line and olfactory placodes. All isoforms show similar spatial expression patterns.

The protein localises to the cytoplasm. It is found in the cytoskeleton. Its subcellular location is the stress fiber. The protein resides in the cell projection. It localises to the lamellipodium. Its function is as follows. Ena/VASP proteins are actin-associated proteins involved in a range of processes dependent on cytoskeleton remodeling and cell polarity such as axon guidance and lamellipodial and filopodial dynamics in migrating cells. Evl enhances actin nucleation and polymerization. The sequence is that of Ena/VASP-like protein from Xenopus laevis (African clawed frog).